We begin with the raw amino-acid sequence, 80 residues long: Conotoxin Cl9.5 (80 aa).

The signal sequence occupies residues 1–23 (MNCYLILTVALLLTSAMTGTTTA). Residues 24 to 37 (GQLNTKGVTLREDD) constitute a propeptide that is removed on maturation. Disulfide bonds link Cys42–Cys59, Cys47–Cys69, and Cys49–Cys74.

In terms of tissue distribution, expressed by the venom duct.

It is found in the secreted. The protein is Conotoxin Cl9.5 of Californiconus californicus (California cone).